A 448-amino-acid chain; its full sequence is B box and SPRY domain-containing protein (448 aa).

A compositionally biased stretch (low complexity) spans 1-18 (MSSDVSGTESGSESGPES). Residues 1 to 58 (MSSDVSGTESGSESGPESVPEPVPEPGPEPESEPGPGPAPGPGPGPAPGPGPGLGREP) form a disordered region. Residues 19–51 (VPEPVPEPGPEPESEPGPGPAPGPGPGPAPGPG) are compositionally biased toward pro residues. Residues 63-111 (QPCQLCPEHGKPLSWFCLSERRPVCATCAGFGGRCHRHRIRRAEEHAEE) form a B box-type zinc finger. Positions 257 to 448 (SPLLTQLWAT…VADQVISIVC (192 aa)) constitute a B30.2/SPRY domain.

Interacts with TRPV5 and TRPV6. Interacts with YWHAZ/14-3-3 protein zeta. Predominantly expressed in testis. Expressed in brain at low levels.

It is found in the cytoplasm. It localises to the membrane. May regulate epithelial calcium transport by inhibiting TRPV5 activity. This is B box and SPRY domain-containing protein (Bspry) from Rattus norvegicus (Rat).